The following is a 302-amino-acid chain: Ornithine carbamoyltransferase (302 aa).

Residues 47-50 (STRT), glutamine 74, arginine 98, and 125-128 (HPCQ) each bind carbamoyl phosphate. Residues asparagine 156, aspartate 220, and 224–225 (SM) contribute to the L-ornithine site. Residues 260 to 261 (CL) and arginine 288 contribute to the carbamoyl phosphate site.

Belongs to the aspartate/ornithine carbamoyltransferase superfamily. OTCase family.

The protein localises to the cytoplasm. The enzyme catalyses carbamoyl phosphate + L-ornithine = L-citrulline + phosphate + H(+). It participates in amino-acid biosynthesis; L-arginine biosynthesis; L-arginine from L-ornithine and carbamoyl phosphate: step 1/3. Reversibly catalyzes the transfer of the carbamoyl group from carbamoyl phosphate (CP) to the N(epsilon) atom of ornithine (ORN) to produce L-citrulline. The polypeptide is Ornithine carbamoyltransferase (Methanosphaera stadtmanae (strain ATCC 43021 / DSM 3091 / JCM 11832 / MCB-3)).